We begin with the raw amino-acid sequence, 160 residues long: Ribosomal RNA large subunit methyltransferase H (160 aa).

S-adenosyl-L-methionine contacts are provided by residues Gly-108 and 127–132 (FGKMTW).

This sequence belongs to the RNA methyltransferase RlmH family. In terms of assembly, homodimer.

The protein resides in the cytoplasm. It catalyses the reaction pseudouridine(1915) in 23S rRNA + S-adenosyl-L-methionine = N(3)-methylpseudouridine(1915) in 23S rRNA + S-adenosyl-L-homocysteine + H(+). Specifically methylates the pseudouridine at position 1915 (m3Psi1915) in 23S rRNA. The protein is Ribosomal RNA large subunit methyltransferase H of Beijerinckia indica subsp. indica (strain ATCC 9039 / DSM 1715 / NCIMB 8712).